A 442-amino-acid polypeptide reads, in one-letter code: Cytochrome c biogenesis CcmF C-terminal-like mitochondrial protein (442 aa).

The next 3 membrane-spanning stretches (helical) occupy residues 6–26, 39–59, and 122–142; these read NFFFFIIFMVVLCGTAAPVLL, PFFNGTIIPILISLFSLLVYL, and YLESFCGVLCLLFFCTFFFLA. Positions 151–175 are disordered; sequence RARRRKGQTLRPNGNEQRRNDKMRC. The span at 166–175 shows a compositional bias: basic and acidic residues; the sequence is EQRRNDKMRC. A helical transmembrane segment spans residues 411–431; sequence FIFFIWIGFMLASLGGLPSLL.

The protein belongs to the CcmF/CycK/Ccl1/NrfE/CcsA family. Interacts with CCMFN2.

It is found in the mitochondrion inner membrane. Its function is as follows. Forms a complex with CCMFN1, CCMFN2 and CCMH that performs the assembly of heme with c-type apocytochromes in mitochondria. The chain is Cytochrome c biogenesis CcmF C-terminal-like mitochondrial protein (CCMFC) from Arabidopsis thaliana (Mouse-ear cress).